The primary structure comprises 253 residues: Pro-opiomelanocortin A (253 aa).

Residues 1–21 (MLCPAWLLAVAVVGVVRGVKG) form the signal peptide. Position 22 is a pyrrolidone carboxylic acid (glutamine 22). 2 disulfides stabilise this stretch: cysteine 23-cysteine 45 and cysteine 29-cysteine 41. Serine 104 bears the N-acetylserine; in Corticotropin mark. Residue valine 116 is modified to Valine amide. Positions 228-253 (QKREQWGREEGEEKRALGERKYHFQG) are disordered. Position 252 is a glutamine amide; partial (glutamine 252).

This sequence belongs to the POMC family. In terms of processing, specific enzymatic cleavages at paired basic residues yield the different active peptides. Acetylation of beta-endorphin occurs in a tissue-specific manner. C-terminal peptide 1 and C-terminal peptide 2 are detected in the anterior part of the nucleus lateralis tuberis of hypothalamus, in dorsal hypothalamus, thalamus, telencephalon, optic tectum and medulla oblongata (at protein level). Expressed in pituitary and hypothalamus of adult diploid animals, and hypothalamus of triploid and ovulated female trout.

The protein localises to the secreted. In terms of biological role, stimulates the adrenal glands to release cortisol. Functionally, melanocyte-stimulating hormone alpha: Anorexigenic peptide. Increases the pigmentation of skin by increasing melanin production in melanocytes. Melanocyte-stimulating hormone beta: Increases the pigmentation of skin by increasing melanin production in melanocytes. Its function is as follows. Beta-endorphin: Endogenous orexigenic opiate. In terms of biological role, endogenous opiate. The polypeptide is Pro-opiomelanocortin A (pomca) (Oncorhynchus mykiss (Rainbow trout)).